Here is a 299-residue protein sequence, read N- to C-terminus: Probable lipid kinase YegS (299 aa).

The DAGKc domain occupies 2-133 (ANFPASLLIL…IDMARVNDKT (132 aa)). Residues threonine 40, 66–72 (GDGTINE), and threonine 95 each bind ATP. Mg(2+) contacts are provided by leucine 215, aspartate 218, and leucine 220. Glutamate 271 acts as the Proton acceptor in catalysis.

Belongs to the diacylglycerol/lipid kinase family. YegS lipid kinase subfamily. Mg(2+) is required as a cofactor. The cofactor is Ca(2+).

It is found in the cytoplasm. In terms of biological role, probably phosphorylates lipids; the in vivo substrate is unknown. This chain is Probable lipid kinase YegS, found in Salmonella heidelberg (strain SL476).